We begin with the raw amino-acid sequence, 830 residues long: Lon protease (830 aa).

A Lon N-terminal domain is found at 20–215 (LPAVAIRDVV…LLIKILANEV (196 aa)). Residue 367 to 374 (GPPGVGKT) participates in ATP binding. Residues 602 to 781 (ENGVGISTGL…DEIVKIAFEK (180 aa)) form the Lon proteolytic domain. Active-site residues include Ser-687 and Lys-730. Residues 784 to 830 (PKSSFKKSKTAPKKESAKKAAKSKKPAVKKPAVKKTKQVKKTAKKKK) are disordered. The span at 802–830 (KAAKSKKPAVKKPAVKKTKQVKKTAKKKK) shows a compositional bias: basic residues.

It belongs to the peptidase S16 family. In terms of assembly, homohexamer. Organized in a ring with a central cavity.

The protein resides in the cytoplasm. It carries out the reaction Hydrolysis of proteins in presence of ATP.. In terms of biological role, ATP-dependent serine protease that mediates the selective degradation of mutant and abnormal proteins as well as certain short-lived regulatory proteins. Required for cellular homeostasis and for survival from DNA damage and developmental changes induced by stress. Degrades polypeptides processively to yield small peptide fragments that are 5 to 10 amino acids long. Binds to DNA in a double-stranded, site-specific manner. In Elusimicrobium minutum (strain Pei191), this protein is Lon protease.